Consider the following 577-residue polypeptide: Protein O-linked-mannose beta-1,4-N-acetylglucosaminyltransferase 2 (577 aa).

Residues 1 to 4 (MNIA) are Cytoplasmic-facing. The chain crosses the membrane as a helical; Signal-anchor for type II membrane protein span at residues 5 to 25 (AVFNALLVSVLATVLWKYIKL). At 26–577 (REHAFMVEEE…PFADVLLCST (552 aa)) the chain is on the lumenal side. Residues N98, N275, N335, and N540 are each glycosylated (N-linked (GlcNAc...) asparagine). In terms of domain architecture, Fibronectin type-III spans 481–577 (KVRDARCQAS…PFADVLLCST (97 aa)).

The protein belongs to the glycosyltransferase 61 family.

The protein localises to the endoplasmic reticulum membrane. It catalyses the reaction 3-O-(alpha-D-mannosyl)-L-threonyl-[protein] + UDP-N-acetyl-alpha-D-glucosamine = 3-O-(N-acetyl-beta-D-glucosaminyl-(1-&gt;4)-alpha-D-mannosyl)-L-threonyl-[protein] + UDP + H(+). The protein operates within protein modification; protein glycosylation. O-linked mannose beta-1,4-N-acetylglucosaminyltransferase that transfers UDP-N-acetyl-D-glucosamine to the 4-position of the mannose to generate N-acetyl-D-glucosamine-beta-1,4-O-D-mannosylprotein. Involved in the biosynthesis of the phosphorylated O-mannosyl trisaccharide (N-acetylgalactosamine-beta-3-N-acetylglucosamine-beta-4-(phosphate-6-)mannose), a carbohydrate structure present in alpha-dystroglycan (DAG1), which is required for binding laminin G-like domain-containing extracellular proteins with high affinity. This Gallus gallus (Chicken) protein is Protein O-linked-mannose beta-1,4-N-acetylglucosaminyltransferase 2 (POMGNT2).